A 456-amino-acid polypeptide reads, in one-letter code: Bifunctional protein GlmU (456 aa).

The segment at 1 to 229 (MTKKALSAVI…VMEVEGANNR (229 aa)) is pyrophosphorylase. UDP-N-acetyl-alpha-D-glucosamine-binding positions include 11–14 (LAAG), K25, Q76, 81–82 (GT), 103–105 (YGD), G140, E154, N169, and N227. Position 105 (D105) interacts with Mg(2+). Residue N227 participates in Mg(2+) binding. The tract at residues 230–250 (LQLAALERYFQNKQASKLLLE) is linker. The tract at residues 251–456 (GVMIYDPARF…QGWQRPIKKK (206 aa)) is N-acetyltransferase. UDP-N-acetyl-alpha-D-glucosamine contacts are provided by R333 and K351. The active-site Proton acceptor is the H363. Positions 366 and 377 each coordinate UDP-N-acetyl-alpha-D-glucosamine. Residues A380, 386–387 (NY), S405, A423, and R440 contribute to the acetyl-CoA site.

In the N-terminal section; belongs to the N-acetylglucosamine-1-phosphate uridyltransferase family. This sequence in the C-terminal section; belongs to the transferase hexapeptide repeat family. In terms of assembly, homotrimer. Mg(2+) serves as cofactor.

It is found in the cytoplasm. It catalyses the reaction alpha-D-glucosamine 1-phosphate + acetyl-CoA = N-acetyl-alpha-D-glucosamine 1-phosphate + CoA + H(+). The enzyme catalyses N-acetyl-alpha-D-glucosamine 1-phosphate + UTP + H(+) = UDP-N-acetyl-alpha-D-glucosamine + diphosphate. Its pathway is nucleotide-sugar biosynthesis; UDP-N-acetyl-alpha-D-glucosamine biosynthesis; N-acetyl-alpha-D-glucosamine 1-phosphate from alpha-D-glucosamine 6-phosphate (route II): step 2/2. It functions in the pathway nucleotide-sugar biosynthesis; UDP-N-acetyl-alpha-D-glucosamine biosynthesis; UDP-N-acetyl-alpha-D-glucosamine from N-acetyl-alpha-D-glucosamine 1-phosphate: step 1/1. The protein operates within bacterial outer membrane biogenesis; LPS lipid A biosynthesis. Its function is as follows. Catalyzes the last two sequential reactions in the de novo biosynthetic pathway for UDP-N-acetylglucosamine (UDP-GlcNAc). The C-terminal domain catalyzes the transfer of acetyl group from acetyl coenzyme A to glucosamine-1-phosphate (GlcN-1-P) to produce N-acetylglucosamine-1-phosphate (GlcNAc-1-P), which is converted into UDP-GlcNAc by the transfer of uridine 5-monophosphate (from uridine 5-triphosphate), a reaction catalyzed by the N-terminal domain. This Haemophilus influenzae (strain 86-028NP) protein is Bifunctional protein GlmU.